Here is an 820-residue protein sequence, read N- to C-terminus: Quinate repressor protein (820 aa).

The disordered stretch occupies residues 25–79; that stretch reads SFEQMLLQQDSNESSRRTSPSRTHSRVDLERHSSHIVSLSSSNGSPSLEDPENRL. Positions 59–71 are enriched in low complexity; it reads HIVSLSSSNGSPS.

This sequence in the N-terminal section; belongs to the shikimate kinase family. In the 2nd section; belongs to the type-I 3-dehydroquinase family. It in the C-terminal section; belongs to the shikimate dehydrogenase family. Interacts with qutA; transcriptional activator of the quinate utilization pathway genes.

Functionally, multi-domain repressor protein that negatively regulates transcription of the quinate utilization pathway genes. May mediate its repressor activity by binding directly to the qutA activator protein. This is Quinate repressor protein (qutR) from Talaromyces stipitatus (strain ATCC 10500 / CBS 375.48 / QM 6759 / NRRL 1006) (Penicillium stipitatum).